The following is a 408-amino-acid chain: UDP-N-acetylglucosamine--dolichyl-phosphate N-acetylglucosaminephosphotransferase (408 aa).

Over 1-10 (MWAFPELPMP) the chain is Lumenal. A helical transmembrane segment spans residues 11–38 (LLVNLIGSLMGFVATVTLIPAFRGHFIA). At 39 to 58 (ARLCGQDLNKSSREQIPESQ) the chain is on the cytoplasmic side. UDP-N-acetyl-alpha-D-glucosamine-binding positions include 44 to 46 (QDL) and Glu56. The helical transmembrane segment at 59-78 (GVISGAVFLIILFCFIPFPF) threads the bilayer. The Lumenal segment spans residues 79 to 91 (LNCFVEQQCKAFP). A helical membrane pass occupies residues 92-118 (HHEFVALIGALLAICCMIFLGFADDVL). Topologically, residues 119 to 121 (NLR) are cytoplasmic. A helical membrane pass occupies residues 122 to 143 (WRHKLLLPTAASLPLLMVYFTN). Lys125 is a binding site for dolichyl phosphate. At 144-166 (FGNTTIVVPKPLRPILGLHLDLG) the chain is on the lumenal side. The N-linked (GlcNAc...) asparagine glycan is linked to Asn146. A helical transmembrane segment spans residues 167-186 (ILYYVYMGLLAVFCTNAINI). Residue 178–186 (VFCTNAINI) coordinates dolichyl phosphate. Asn185 serves as a coordination point for Mg(2+). The Cytoplasmic portion of the chain corresponds to 187–192 (LAGING). Asn191 is a UDP-N-acetyl-alpha-D-glucosamine binding site. The chain crosses the membrane as a helical span at residues 193–213 (LEAGQSLVISASIIVFNLVEL). Over 214 to 218 (DGDYR) the chain is Lumenal. A helical membrane pass occupies residues 219 to 242 (DDHIFSLYFMIPFFFTTLGLLYHN). Over 243–250 (WYPSRVFV) the chain is Cytoplasmic. Residues 251 to 269 (GDTFCYFAGMTFAVVGILG) traverse the membrane as a helical segment. Asp252 contacts Mg(2+). Over 270-271 (HF) the chain is Lumenal. A helical membrane pass occupies residues 272-293 (SKTMLLFFMPQVFNFLYSLPQL). The Cytoplasmic portion of the chain corresponds to 294–375 (LHIIPCPRHR…LLLKVFGPMH (82 aa)). 301 to 303 (RHR) contacts UDP-N-acetyl-alpha-D-glucosamine. The helical transmembrane segment at 376–400 (ERNLTLLLLLLQVVGSAVTFSIRYQ) threads the bilayer. Over 401-408 (LVRLFYDV) the chain is Lumenal.

This sequence belongs to the glycosyltransferase 4 family. As to quaternary structure, homodimer. Mg(2+) is required as a cofactor.

Its subcellular location is the endoplasmic reticulum membrane. The catalysed reaction is a di-trans,poly-cis-dolichyl phosphate + UDP-N-acetyl-alpha-D-glucosamine = an N-acetyl-alpha-D-glucosaminyl-diphospho-di-trans,poly-cis-dolichol + UMP. It participates in protein modification; protein glycosylation. Its activity is regulated as follows. Inhibited by natural nucleoside antibiotic tunicamycin, which acts as a structural analog and competitor of UDP-GlcNAc. Activated by Man-P-Dol. Activated by manganese. Inhibited by diumycin. UDP-N-acetylglucosamine--dolichyl-phosphate N-acetylglucosaminephosphotransferase that operates in the biosynthetic pathway of dolichol-linked oligosaccharides, the glycan precursors employed in protein asparagine (N)-glycosylation. The assembly of dolichol-linked oligosaccharides begins on the cytosolic side of the endoplasmic reticulum membrane and finishes in its lumen. The sequential addition of sugars to dolichol pyrophosphate produces dolichol-linked oligosaccharides containing fourteen sugars, including two GlcNAcs, nine mannoses and three glucoses. Once assembled, the oligosaccharide is transferred from the lipid to nascent proteins by oligosaccharyltransferases. Catalyzes the initial step of dolichol-linked oligosaccharide biosynthesis, transfering GlcNAc-1-P from cytosolic UDP-GlcNAc onto the carrier lipid dolichyl phosphate (P-dolichol), yielding GlcNAc-P-P-dolichol embedded in the cytoplasmic leaflet of the endoplasmic reticulum membrane. The polypeptide is UDP-N-acetylglucosamine--dolichyl-phosphate N-acetylglucosaminephosphotransferase (Bos taurus (Bovine)).